We begin with the raw amino-acid sequence, 463 residues long: Ataxin-10 homolog (463 aa).

Belongs to the ataxin-10 family.

Its subcellular location is the cytoplasm. In terms of biological role, may play a role in the regulation of cytokinesis. This Candida albicans (strain SC5314 / ATCC MYA-2876) (Yeast) protein is Ataxin-10 homolog (CTR86).